The sequence spans 971 residues: MELDEVIQGIVSAIGGFDYSDDEKVYVLGDEALACLKDLKRYLQVVDEKYKVWQIRSLLSSLQLVTNDICPILSDWDKDITNYRNWRIALACVELLVPLTWPLETEHETFRENVDVLYNLRQAQSNYKNSILSYKKGSVLSAILAVLLKPLSTPAESRTLRDKGIIRIVLLLFRNILQIDELKTKNETIISFAKAHILDLIVTLVSNLDEFEHFDVYILEIVYNLIRGCKPSALFSDASLTNSQTELNSLLLKESTQNRYLKRNAHTRHNRFGTMLSVQTEDRRFTIASQNIKTDGLDELDSHKRFRKRGTRRKHFDDINKSFFINTEAGTALRNFAVEFLEAGFNPLFQSLLKDLEREDPRVLPIHKMQLLYVQSFFLEFMRFSSKPKKTEEIYSNDYSFGLAASVFDQRALIMHNRLMVESFEMKQWSTFQASMLSMTQLLFTLRSMTLCSSEIYQRIADNLLSNIFYQEEILLLVYSALKHFKTQSFGYLDAITELTIVLLKELEKFSSAKQYLYVKKRRRNQKSVDSNVLESDEDEESSLINANAAVEDRLFDFGRYESRYCDNGCIDSFVLFLQCYQDLDSKQIHRAISFFYRIFVKQKCHVYLYRLDFLRVLDKMFNDHVYFSTTNSARQDFEQFFVYYMRKLSDALKDVPALFIELPFPKLTDTFYYLEYGKSPLFSIHGSRKGPLYETVPGLSHLEKVAAVVACLINENKSDLLDELKVQLNCLISERKLITLADENKYINEGGNDGERMGKNLKGDTDSFNTALLKDGKFRLLLELCGFEESDNNIDVQALWKLPNSVIIDELVEHAMLLRRFTDDPPTFEGTKPEDLLVRKQRGNVRLPSSSEGETSDEEIEFEADDPITFANRREALNKITDRKRKKMKTNETIIDHTTRKKKENHLRSAKYIVDSDDDSETDIAFFQSEAALREKNAQKASALFKRIDDLEMEGKLQEIEQLSENSSSD.

Serine 528, serine 536, and serine 970 each carry phosphoserine.

Fork protection complex (FPC) consisting of swi1 and swi3 interacts with mat1 cis-acting sequences and mat1-proximal polar-terminator of replication (RTS1).

It is found in the nucleus. Functionally, forms a fork protection complex (FPC) with swi3. FPC coordinates leading and lagging strand synthesis and moves with the replication fork. It is required for programmed fork-pausing which is necessary for mating-type switching. FPC stabilizes replication forks in a configuration that is recognized by replication checkpoint sensors. It is involved in termination at the mat1-proximal polar-terminator of replication (RTS1) and also required for activation of the Rad53-like checkpoint kinase cds1. The chain is Mating-type switching protein swi1 (swi1) from Schizosaccharomyces pombe (strain 972 / ATCC 24843) (Fission yeast).